A 657-amino-acid polypeptide reads, in one-letter code: Putative serine protease (657 aa).

The next 3 membrane-spanning stretches (helical) occupy residues 4-24 (YLAT…LLMP), 46-62 (WLLT…PSGT), and 109-131 (LLSG…VLML). Residues 239-434 (QPGSDFVECE…ETDRYARTME (196 aa)) form the Peptidase S39 domain. Residues histidine 284, aspartate 318, and serine 386 each act as for protease activity in the active site. The disordered stretch occupies residues 513-605 (PLGGLPISNG…PPSTGSVPKS (93 aa)). Over residues 548–559 (HTRRRRRNKKKS) the composition is skewed to basic residues. Residues 560–569 (KNSETGHGPE) show a composition bias toward basic and acidic residues. The segment covering 571–589 (QSQQQSRPSSPIPDDSAPV) has biased composition (low complexity).

Belongs to the peptidase S39B family.

It is found in the host membrane. Functionally, putative serine protease. This chain is Putative serine protease, found in Mushroom bacilliform virus (isolate Australia/AUS LF-1) (MBV).